Consider the following 208-residue polypeptide: Holliday junction branch migration complex subunit RuvA (208 aa).

A domain I region spans residues 1–64; the sequence is MIGKLKGIVD…EDMIRLYGFR (64 aa). The interval 65–143 is domain II; the sequence is SDAEREWFRL…AFAPVDPALV (79 aa). The tract at residues 144–152 is flexible linker; it reads ALTGAVEDR. The domain III stretch occupies residues 153-208; the sequence is TAPQPVADAISALVNLGYPQVQASAAIAAALKGLGDGAETVEAKTLIRLGLRELAR.

Belongs to the RuvA family. In terms of assembly, homotetramer. Forms an RuvA(8)-RuvB(12)-Holliday junction (HJ) complex. HJ DNA is sandwiched between 2 RuvA tetramers; dsDNA enters through RuvA and exits via RuvB. An RuvB hexamer assembles on each DNA strand where it exits the tetramer. Each RuvB hexamer is contacted by two RuvA subunits (via domain III) on 2 adjacent RuvB subunits; this complex drives branch migration. In the full resolvosome a probable DNA-RuvA(4)-RuvB(12)-RuvC(2) complex forms which resolves the HJ.

It localises to the cytoplasm. Its function is as follows. The RuvA-RuvB-RuvC complex processes Holliday junction (HJ) DNA during genetic recombination and DNA repair, while the RuvA-RuvB complex plays an important role in the rescue of blocked DNA replication forks via replication fork reversal (RFR). RuvA specifically binds to HJ cruciform DNA, conferring on it an open structure. The RuvB hexamer acts as an ATP-dependent pump, pulling dsDNA into and through the RuvAB complex. HJ branch migration allows RuvC to scan DNA until it finds its consensus sequence, where it cleaves and resolves the cruciform DNA. The polypeptide is Holliday junction branch migration complex subunit RuvA (Methylorubrum populi (strain ATCC BAA-705 / NCIMB 13946 / BJ001) (Methylobacterium populi)).